Reading from the N-terminus, the 154-residue chain is Neurotrophin-3 (154 aa).

The N-terminal stretch at 1–18 is a signal peptide; sequence MSILFYVMFLAYLRGVQG. Residues 19–134 constitute a propeptide that is removed on maturation; sequence NSMDQRSLPE…VNSRSPRRKR (116 aa).

The protein belongs to the NGF-beta family.

The protein localises to the secreted. In terms of biological role, seems to promote the survival of visceral and proprioceptive sensory neurons. The sequence is that of Neurotrophin-3 (NTF3) from Cervus elaphus (Red deer).